A 193-amino-acid chain; its full sequence is FMN-dependent NADH:quinone oxidoreductase (193 aa).

Residues Ser-9, 15–17 (SSS), and 137–140 (TSGG) contribute to the FMN site.

This sequence belongs to the azoreductase type 1 family. In terms of assembly, homodimer. The cofactor is FMN.

It carries out the reaction 2 a quinone + NADH + H(+) = 2 a 1,4-benzosemiquinone + NAD(+). It catalyses the reaction N,N-dimethyl-1,4-phenylenediamine + anthranilate + 2 NAD(+) = 2-(4-dimethylaminophenyl)diazenylbenzoate + 2 NADH + 2 H(+). Functionally, quinone reductase that provides resistance to thiol-specific stress caused by electrophilic quinones. Its function is as follows. Also exhibits azoreductase activity. Catalyzes the reductive cleavage of the azo bond in aromatic azo compounds to the corresponding amines. This is FMN-dependent NADH:quinone oxidoreductase from Pelagibacter ubique (strain HTCC1062).